Here is a 352-residue protein sequence, read N- to C-terminus: Probable dual-specificity RNA methyltransferase RlmN (352 aa).

Glu92 serves as the catalytic Proton acceptor. A Radical SAM core domain is found at 98–328 (YKHGFTACIS…ATIRREMGTD (231 aa)). Cys105 and Cys333 are joined by a disulfide. [4Fe-4S] cluster contacts are provided by Cys112, Cys116, and Cys119. Residues 159-160 (GE), Ser191, 214-216 (SLH), and Asn290 each bind S-adenosyl-L-methionine. The active-site S-methylcysteine intermediate is Cys333.

It belongs to the radical SAM superfamily. RlmN family. Requires [4Fe-4S] cluster as cofactor.

The protein resides in the cytoplasm. It catalyses the reaction adenosine(2503) in 23S rRNA + 2 reduced [2Fe-2S]-[ferredoxin] + 2 S-adenosyl-L-methionine = 2-methyladenosine(2503) in 23S rRNA + 5'-deoxyadenosine + L-methionine + 2 oxidized [2Fe-2S]-[ferredoxin] + S-adenosyl-L-homocysteine. It carries out the reaction adenosine(37) in tRNA + 2 reduced [2Fe-2S]-[ferredoxin] + 2 S-adenosyl-L-methionine = 2-methyladenosine(37) in tRNA + 5'-deoxyadenosine + L-methionine + 2 oxidized [2Fe-2S]-[ferredoxin] + S-adenosyl-L-homocysteine. In terms of biological role, specifically methylates position 2 of adenine 2503 in 23S rRNA and position 2 of adenine 37 in tRNAs. This is Probable dual-specificity RNA methyltransferase RlmN from Alkaliphilus metalliredigens (strain QYMF).